Reading from the N-terminus, the 344-residue chain is MGIESSCDETGVGIVRWHPDGTCELLADEVASSVDQHARFGGVVPEIASRAHLEAIVPAMRRALSAAGIAKPDALAVTIGPGLAGALLVGVAAAKAYAAAWDVPFYALNHLGGHVAVDTLEHGPMPPCVALLVSGGHTHLLHVTDLAAPIVELGSTVDDAAGEAFDKVARLLGLGFPGGPALDAAARDGDPHAIAFPRGMTGPRDPRYDFSFSGLKTAVARHVEAAQRAGVAIADLPIPDIAASFQEAVADVLTMKAVRAAQDMGVDTLVLGGGATANSRIRSLAEERCAAAGLTLRVPKPRLCTDNGVMIAALGAHVIAGGARPSPLTVASDPGLPVSVSQIA.

Residues His110 and His114 each contribute to the Fe cation site. Substrate contacts are provided by residues 132 to 136 (LVSGG), Asp166, Gly179, Asp183, and Asn278. Asp306 is a Fe cation binding site.

It belongs to the KAE1 / TsaD family. Fe(2+) is required as a cofactor.

The protein resides in the cytoplasm. The catalysed reaction is L-threonylcarbamoyladenylate + adenosine(37) in tRNA = N(6)-L-threonylcarbamoyladenosine(37) in tRNA + AMP + H(+). Required for the formation of a threonylcarbamoyl group on adenosine at position 37 (t(6)A37) in tRNAs that read codons beginning with adenine. Is involved in the transfer of the threonylcarbamoyl moiety of threonylcarbamoyl-AMP (TC-AMP) to the N6 group of A37, together with TsaE and TsaB. TsaD likely plays a direct catalytic role in this reaction. The chain is tRNA N6-adenosine threonylcarbamoyltransferase from Nocardia farcinica (strain IFM 10152).